The chain runs to 441 residues: E3 ubiquitin-protein ligase APD1 (441 aa).

2 helical membrane-spanning segments follow: residues 60-80 (SNLYCFSLALLIWFFASFILI) and 305-325 (IAYVIGTGVVICFMLVAIQFC). Residues 390–429 (CAICFDVPRDCFFLPCGHSVSCYECGTTMQEADGSCPICR) form an RING-type zinc finger.

As to expression, expressed in the shoot apical meristems (SAM), root tips and inflorescences, and, at low levels, in floral buds and pollen.

It is found in the endomembrane system. The protein resides in the vacuole membrane. It carries out the reaction S-ubiquitinyl-[E2 ubiquitin-conjugating enzyme]-L-cysteine + [acceptor protein]-L-lysine = [E2 ubiquitin-conjugating enzyme]-L-cysteine + N(6)-ubiquitinyl-[acceptor protein]-L-lysine.. It participates in protein modification; protein ubiquitination. Involved in pollen mitosis II (PMII) regulation during male gametogenesis. In Arabidopsis thaliana (Mouse-ear cress), this protein is E3 ubiquitin-protein ligase APD1.